Here is a 276-residue protein sequence, read N- to C-terminus: Large ribosomal subunit protein uL2cy (276 aa).

2 disordered regions span residues 1–25 (MAIH…VKSN) and 225–276 (MNPV…RRSK). Polar residues predominate over residues 7–25 (KTSTPSTRNGTVDSQVKSN).

Belongs to the universal ribosomal protein uL2 family. In terms of assembly, part of the 50S ribosomal subunit.

It is found in the plastid. The protein localises to the chloroplast. In Coffea arabica (Arabian coffee), this protein is Large ribosomal subunit protein uL2cy (rpl2-B).